Consider the following 174-residue polypeptide: D(1B) dopamine receptor (174 aa).

Residues S1–V10 traverse the membrane as a helical segment. The Cytoplasmic portion of the chain corresponds to D11–L32. Residues V33–W54 form a helical membrane-spanning segment. Residues H55–R96 are Extracellular-facing. The disordered stretch occupies residues G64–E88. N95 carries N-linked (GlcNAc...) asparagine glycosylation. A helical membrane pass occupies residues T97–T119. At R120–K169 the chain is on the cytoplasmic side. The chain crosses the membrane as a helical span at residues T170 to I174.

Belongs to the G-protein coupled receptor 1 family.

The protein resides in the cell membrane. Its function is as follows. Dopamine receptor whose activity is mediated by G proteins which activate adenylyl cyclase. In Bos taurus (Bovine), this protein is D(1B) dopamine receptor (DRD5).